A 228-amino-acid chain; its full sequence is MTVSTSKTPKKNIKYTLTHTLQKWKETLKKITHETLSSIDDSSGSDEKIEALFTVSQPAVVASKGIDRDSGASMSQVGGGVNSTLEMKLTDESEESSSANNTTTTASHTLSNSKKSTQNFENYNVVEERIKLAQKSKAPFCNAEKIWKRRRQLWTQPTEQSESANNDGVTRREIFQAIPQEYYARVYKKLVVDDKPLREPLNLEDALQVINAGWTETRKWANAAKGMP.

The disordered stretch occupies residues 90–115 (TDESEESSSANNTTTTASHTLSNSKK). A compositionally biased stretch (low complexity) spans 96-113 (SSSANNTTTTASHTLSNS).

It localises to the cytoplasm. Its subcellular location is the cell cortex. In terms of biological role, deletion results in antifungal drug fluconazole-resistant phenotype. This is an uncharacterized protein from Saccharomyces cerevisiae (strain ATCC 204508 / S288c) (Baker's yeast).